The chain runs to 1031 residues: Telomerase reverse transcriptase (1031 aa).

The Reverse transcriptase domain maps to 498-852 (KEVEEWKKSL…DYCDWIGISI (355 aa)). Mg(2+) contacts are provided by aspartate 603, aspartate 781, and aspartate 782.

This sequence belongs to the reverse transcriptase family. Telomerase subfamily. Component of the telomerase holoenzyme complex composed minimally of the catalytic subunit p123 and the telomerase RNA template component.

The protein resides in the nucleus. Its subcellular location is the chromosome. It is found in the telomere. It catalyses the reaction DNA(n) + a 2'-deoxyribonucleoside 5'-triphosphate = DNA(n+1) + diphosphate. In terms of biological role, telomerase is a ribonucleoprotein enzyme essential for the replication of chromosome termini in most eukaryotes. It elongates telomeres. It is a reverse transcriptase that adds simple sequence repeats to chromosome ends by copying a template sequence within the RNA component of the enzyme. The sequence is that of Telomerase reverse transcriptase from Euplotes aediculatus (Ciliate).